The chain runs to 71 residues: MKKGIHPNYSEVTVTCSCGNVIKTHSTVGRDLNLDVCGECHPFYTGKQRDVASGGRVDRFNKRFSVPGAKK.

4 residues coordinate Zn(2+): Cys16, Cys18, Cys37, and Cys40.

The protein belongs to the bacterial ribosomal protein bL31 family. Type A subfamily. In terms of assembly, part of the 50S ribosomal subunit. Zn(2+) is required as a cofactor.

Its function is as follows. Binds the 23S rRNA. This Pectobacterium atrosepticum (strain SCRI 1043 / ATCC BAA-672) (Erwinia carotovora subsp. atroseptica) protein is Large ribosomal subunit protein bL31.